The chain runs to 246 residues: Probable ABC transporter permease protein BMEII0107 (246 aa).

6 consecutive transmembrane segments (helical) span residues 12-32, 63-83, 94-114, 122-142, 172-192, and 211-231; these read LLSF…GAVV, VLSG…LMGW, WVQF…IVTL, IFVI…QGVI, VPFI…TVVA, and LYYD…LGLF. Residues 56-236 enclose the ABC transmembrane type-1 domain; it reads IFASLRRVLS…ILGLFMDRLL (181 aa).

It belongs to the binding-protein-dependent transport system permease family. In terms of assembly, the complex is composed of two ATP-binding proteins (BMEII0108), two transmembrane proteins (BMEII0107) and a solute-binding protein (BMEII0109).

Its subcellular location is the cell inner membrane. In terms of biological role, probably part of an ABC transporter complex. Probably responsible for the translocation of the substrate across the membrane. This is Probable ABC transporter permease protein BMEII0107 from Brucella melitensis biotype 1 (strain ATCC 23456 / CCUG 17765 / NCTC 10094 / 16M).